Here is a 186-residue protein sequence, read N- to C-terminus: Threonylcarbamoyl-AMP synthase (186 aa).

A YrdC-like domain is found at 2 to 186 (STEFEQAVAA…ARTGAVIRPS (185 aa)).

The protein belongs to the SUA5 family. TsaC subfamily.

The protein localises to the cytoplasm. The enzyme catalyses L-threonine + hydrogencarbonate + ATP = L-threonylcarbamoyladenylate + diphosphate + H2O. Required for the formation of a threonylcarbamoyl group on adenosine at position 37 (t(6)A37) in tRNAs that read codons beginning with adenine. Catalyzes the conversion of L-threonine, HCO(3)(-)/CO(2) and ATP to give threonylcarbamoyl-AMP (TC-AMP) as the acyladenylate intermediate, with the release of diphosphate. The protein is Threonylcarbamoyl-AMP synthase of Aeromonas salmonicida (strain A449).